The following is a 179-amino-acid chain: Probable F-box protein At3g25550 (179 aa).

Positions 19-55 (IPNDDVLEEIIVRLPVKTLTRFQTVSKHWRHTIKSRN) constitute an F-box domain.

The polypeptide is Probable F-box protein At3g25550 (Arabidopsis thaliana (Mouse-ear cress)).